A 418-amino-acid polypeptide reads, in one-letter code: Glutamyl-tRNA reductase (418 aa).

Residues 49–52 (TCNR), serine 108, 113–115 (EPQ), and glutamine 119 contribute to the substrate site. Cysteine 50 serves as the catalytic Nucleophile. 188-193 (GAGETI) provides a ligand contact to NADP(+).

The protein belongs to the glutamyl-tRNA reductase family. As to quaternary structure, homodimer.

The catalysed reaction is (S)-4-amino-5-oxopentanoate + tRNA(Glu) + NADP(+) = L-glutamyl-tRNA(Glu) + NADPH + H(+). Its pathway is porphyrin-containing compound metabolism; protoporphyrin-IX biosynthesis; 5-aminolevulinate from L-glutamyl-tRNA(Glu): step 1/2. Its function is as follows. Catalyzes the NADPH-dependent reduction of glutamyl-tRNA(Glu) to glutamate 1-semialdehyde (GSA). The polypeptide is Glutamyl-tRNA reductase (Aliivibrio fischeri (strain ATCC 700601 / ES114) (Vibrio fischeri)).